A 256-amino-acid chain; its full sequence is Pimeloyl-[acyl-carrier protein] methyl ester esterase (256 aa).

Residues 15-242 enclose the AB hydrolase-1 domain; it reads HLVLLHGWGL…AAHAPFISHP (228 aa). Substrate contacts are provided by residues Trp22, 82-83, and 143-147; these read SL and FLALQ. Ser82 functions as the Nucleophile in the catalytic mechanism. Residues Asp207 and His235 contribute to the active site. His235 lines the substrate pocket.

It belongs to the AB hydrolase superfamily. Carboxylesterase BioH family. Monomer.

The protein resides in the cytoplasm. The enzyme catalyses 6-carboxyhexanoyl-[ACP] methyl ester + H2O = 6-carboxyhexanoyl-[ACP] + methanol + H(+). It functions in the pathway cofactor biosynthesis; biotin biosynthesis. The physiological role of BioH is to remove the methyl group introduced by BioC when the pimeloyl moiety is complete. It allows to synthesize pimeloyl-ACP via the fatty acid synthetic pathway through the hydrolysis of the ester bonds of pimeloyl-ACP esters. The chain is Pimeloyl-[acyl-carrier protein] methyl ester esterase from Citrobacter koseri (strain ATCC BAA-895 / CDC 4225-83 / SGSC4696).